A 406-amino-acid chain; its full sequence is 4-hydroxy-3-methylbut-2-en-1-yl diphosphate synthase (ferredoxin) (406 aa).

The [4Fe-4S] cluster site is built by Cys-315, Cys-318, Cys-349, and Glu-356.

It belongs to the IspG family. [4Fe-4S] cluster serves as cofactor.

The enzyme catalyses (2E)-4-hydroxy-3-methylbut-2-enyl diphosphate + 2 oxidized [2Fe-2S]-[ferredoxin] + H2O = 2-C-methyl-D-erythritol 2,4-cyclic diphosphate + 2 reduced [2Fe-2S]-[ferredoxin] + H(+). Its pathway is isoprenoid biosynthesis; isopentenyl diphosphate biosynthesis via DXP pathway; isopentenyl diphosphate from 1-deoxy-D-xylulose 5-phosphate: step 5/6. In terms of biological role, converts 2C-methyl-D-erythritol 2,4-cyclodiphosphate (ME-2,4cPP) into 1-hydroxy-2-methyl-2-(E)-butenyl 4-diphosphate. This Trichodesmium erythraeum (strain IMS101) protein is 4-hydroxy-3-methylbut-2-en-1-yl diphosphate synthase (ferredoxin).